Here is a 448-residue protein sequence, read N- to C-terminus: Tubby-like F-box protein 3 (448 aa).

In terms of domain architecture, F-box spans 56–102; the sequence is ESRWASLPPELLREVIRRLEADESTWPSRRNVVCFAAVCRTWREMCK. Pro residues predominate over residues 387-403; it reads PSPPPAGAPTPSQPGPA. Residues 387–406 are disordered; it reads PSPPPAGAPTPSQPGPADPE.

This sequence belongs to the TUB family. As to expression, expressed in roots, leaves, flowers and seeds.

The protein is Tubby-like F-box protein 3 (TULP3) of Oryza sativa subsp. japonica (Rice).